The sequence spans 378 residues: Succinyl-diaminopimelate desuccinylase 2 (378 aa).

Residue histidine 68 coordinates Zn(2+). Aspartate 70 is a catalytic residue. A Zn(2+)-binding site is contributed by aspartate 101. Glutamate 135 acts as the Proton acceptor in catalysis. 3 residues coordinate Zn(2+): glutamate 136, glutamate 164, and histidine 350.

It belongs to the peptidase M20A family. DapE subfamily. As to quaternary structure, homodimer. Zn(2+) serves as cofactor. Co(2+) is required as a cofactor.

It carries out the reaction N-succinyl-(2S,6S)-2,6-diaminopimelate + H2O = (2S,6S)-2,6-diaminopimelate + succinate. The protein operates within amino-acid biosynthesis; L-lysine biosynthesis via DAP pathway; LL-2,6-diaminopimelate from (S)-tetrahydrodipicolinate (succinylase route): step 3/3. Its function is as follows. Catalyzes the hydrolysis of N-succinyl-L,L-diaminopimelic acid (SDAP), forming succinate and LL-2,6-diaminopimelate (DAP), an intermediate involved in the bacterial biosynthesis of lysine and meso-diaminopimelic acid, an essential component of bacterial cell walls. The chain is Succinyl-diaminopimelate desuccinylase 2 from Alteromonas mediterranea (strain DSM 17117 / CIP 110805 / LMG 28347 / Deep ecotype).